Here is a 312-residue protein sequence, read N- to C-terminus: Methionyl-tRNA formyltransferase (312 aa).

A (6S)-5,6,7,8-tetrahydrofolate-binding site is contributed by 109-112 (SLLP).

This sequence belongs to the Fmt family.

The enzyme catalyses L-methionyl-tRNA(fMet) + (6R)-10-formyltetrahydrofolate = N-formyl-L-methionyl-tRNA(fMet) + (6S)-5,6,7,8-tetrahydrofolate + H(+). Its function is as follows. Attaches a formyl group to the free amino group of methionyl-tRNA(fMet). The formyl group appears to play a dual role in the initiator identity of N-formylmethionyl-tRNA by promoting its recognition by IF2 and preventing the misappropriation of this tRNA by the elongation apparatus. This is Methionyl-tRNA formyltransferase from Geotalea daltonii (strain DSM 22248 / JCM 15807 / FRC-32) (Geobacter daltonii).